We begin with the raw amino-acid sequence, 122 residues long: Putative iron-sulfur cluster insertion protein ErpA (122 aa).

The iron-sulfur cluster site is built by cysteine 50, cysteine 114, and cysteine 116.

It belongs to the HesB/IscA family. In terms of assembly, homodimer. Iron-sulfur cluster serves as cofactor.

In terms of biological role, required for insertion of 4Fe-4S clusters. The protein is Putative iron-sulfur cluster insertion protein ErpA of Burkholderia mallei (strain NCTC 10247).